Reading from the N-terminus, the 308-residue chain is Isochorismatase domain-containing protein 1 (308 aa).

This sequence belongs to the isochorismatase family.

In Xenopus tropicalis (Western clawed frog), this protein is Isochorismatase domain-containing protein 1 (isoc1).